Reading from the N-terminus, the 668-residue chain is DNA ligase (668 aa).

Residues D31 to D35, S80 to L81, and E111 contribute to the NAD(+) site. Residue K113 is the N6-AMP-lysine intermediate of the active site. NAD(+)-binding residues include R134, E170, K285, and K309. Zn(2+) contacts are provided by C403, C406, C421, and C427. Positions N587–E668 constitute a BRCT domain.

This sequence belongs to the NAD-dependent DNA ligase family. LigA subfamily. Mg(2+) serves as cofactor. It depends on Mn(2+) as a cofactor.

It catalyses the reaction NAD(+) + (deoxyribonucleotide)n-3'-hydroxyl + 5'-phospho-(deoxyribonucleotide)m = (deoxyribonucleotide)n+m + AMP + beta-nicotinamide D-nucleotide.. In terms of biological role, DNA ligase that catalyzes the formation of phosphodiester linkages between 5'-phosphoryl and 3'-hydroxyl groups in double-stranded DNA using NAD as a coenzyme and as the energy source for the reaction. It is essential for DNA replication and repair of damaged DNA. The sequence is that of DNA ligase from Flavobacterium johnsoniae (strain ATCC 17061 / DSM 2064 / JCM 8514 / BCRC 14874 / CCUG 350202 / NBRC 14942 / NCIMB 11054 / UW101) (Cytophaga johnsonae).